The sequence spans 236 residues: 1-(5-phosphoribosyl)-5-[(5-phosphoribosylamino)methylideneamino] imidazole-4-carboxamide isomerase (236 aa).

D8 serves as the catalytic Proton acceptor. The active-site Proton donor is D129.

Belongs to the HisA/HisF family.

The protein localises to the cytoplasm. It carries out the reaction 1-(5-phospho-beta-D-ribosyl)-5-[(5-phospho-beta-D-ribosylamino)methylideneamino]imidazole-4-carboxamide = 5-[(5-phospho-1-deoxy-D-ribulos-1-ylimino)methylamino]-1-(5-phospho-beta-D-ribosyl)imidazole-4-carboxamide. The protein operates within amino-acid biosynthesis; L-histidine biosynthesis; L-histidine from 5-phospho-alpha-D-ribose 1-diphosphate: step 4/9. This is 1-(5-phosphoribosyl)-5-[(5-phosphoribosylamino)methylideneamino] imidazole-4-carboxamide isomerase from Methanosphaerula palustris (strain ATCC BAA-1556 / DSM 19958 / E1-9c).